A 219-amino-acid polypeptide reads, in one-letter code: UPF0173 metal-dependent hydrolase LSL_0324 (219 aa).

The protein belongs to the UPF0173 family.

This Ligilactobacillus salivarius (strain UCC118) (Lactobacillus salivarius) protein is UPF0173 metal-dependent hydrolase LSL_0324.